The chain runs to 386 residues: 8-amino-7-oxononanoate synthase (386 aa).

Substrate is bound at residue R20. A pyridoxal 5'-phosphate-binding site is contributed by 107 to 108 (GY). H132 contacts substrate. S178, H206, and T234 together coordinate pyridoxal 5'-phosphate. At K237 the chain carries N6-(pyridoxal phosphate)lysine. T351 is a substrate binding site.

This sequence belongs to the class-II pyridoxal-phosphate-dependent aminotransferase family. BioF subfamily. In terms of assembly, homodimer. Pyridoxal 5'-phosphate serves as cofactor.

It catalyses the reaction 6-carboxyhexanoyl-[ACP] + L-alanine + H(+) = (8S)-8-amino-7-oxononanoate + holo-[ACP] + CO2. Its pathway is cofactor biosynthesis; biotin biosynthesis. Its function is as follows. Catalyzes the decarboxylative condensation of pimeloyl-[acyl-carrier protein] and L-alanine to produce 8-amino-7-oxononanoate (AON), [acyl-carrier protein], and carbon dioxide. The chain is 8-amino-7-oxononanoate synthase from Aromatoleum aromaticum (strain DSM 19018 / LMG 30748 / EbN1) (Azoarcus sp. (strain EbN1)).